A 377-amino-acid chain; its full sequence is GTP 3',8-cyclase (377 aa).

A disordered region spans residues 1–29 (MTTRLYLSPTPPRNDREGASKSTSASIKH). The Radical SAM core domain maps to 45–271 (RFGRIARDLR…FTLSPAKEPR (227 aa)). Position 54 (arginine 54) interacts with GTP. [4Fe-4S] cluster-binding residues include cysteine 61 and cysteine 65. S-adenosyl-L-methionine is bound at residue tyrosine 67. A [4Fe-4S] cluster-binding site is contributed by cysteine 68. GTP is bound at residue arginine 105. Glycine 109 lines the S-adenosyl-L-methionine pocket. Threonine 140 is a GTP binding site. Serine 164 lines the S-adenosyl-L-methionine pocket. Lysine 201 provides a ligand contact to GTP. Residue methionine 235 participates in S-adenosyl-L-methionine binding. [4Fe-4S] cluster is bound by residues cysteine 304 and cysteine 307. 309-311 (RSR) serves as a coordination point for GTP. Residue cysteine 321 coordinates [4Fe-4S] cluster.

The protein belongs to the radical SAM superfamily. MoaA family. In terms of assembly, monomer and homodimer. Requires [4Fe-4S] cluster as cofactor.

It carries out the reaction GTP + AH2 + S-adenosyl-L-methionine = (8S)-3',8-cyclo-7,8-dihydroguanosine 5'-triphosphate + 5'-deoxyadenosine + L-methionine + A + H(+). Its pathway is cofactor biosynthesis; molybdopterin biosynthesis. In terms of biological role, catalyzes the cyclization of GTP to (8S)-3',8-cyclo-7,8-dihydroguanosine 5'-triphosphate. This chain is GTP 3',8-cyclase, found in Corynebacterium glutamicum (strain ATCC 13032 / DSM 20300 / JCM 1318 / BCRC 11384 / CCUG 27702 / LMG 3730 / NBRC 12168 / NCIMB 10025 / NRRL B-2784 / 534).